The chain runs to 525 residues: MSFNIKEISEMIEEQIRNYNKEIVQTEQGTVVSVGDGIALIYGLDNAIMGEFLKFPNNVYGMVLNLEESAVGAIILGDETLIREGDIVKRTNKVVETPVGDALLGRVINALSKPIDNLGPINFTKTRPIERVATSVMARRSVSQPLETGILAIDSAIPIGKGQRELIIGDRQTGKTAIAIDAIINQKNKNVKCIYVAIGQKDSTIVQVVEKLKKYGAMEYTVVVNAGASQPAPLQYLSPYVGVTIAEEWMENGNDVLIIYDDLSKHAVSYRQMSLLLRRPPGREAYPGDVFYLHSRLLERAARVNENYGGGSITALPIIETQAGDISAYIPTNVISITDGQIFLSSELFNQGVRPAVDIGSSVSRVGSAAQIKSIKQVSGTLKLELAQYYELELFAKFGSDLDEATKATLDQGAKIIQMLIQKQHNPLEQVDQAILLLTIKSHLIKWLPVESIYNFKHEILSHFKNDKHAFELRKKLDEQKTFDDQLQQQILKEAQKVVLKITKNINEYKPGTFGNISEYQNLGK.

ATP is bound at residue 169–176 (GDRQTGKT).

Belongs to the ATPase alpha/beta chains family. F-type ATPases have 2 components, CF(1) - the catalytic core - and CF(0) - the membrane proton channel. CF(1) has five subunits: alpha(3), beta(3), gamma(1), delta(1), epsilon(1). CF(0) has three main subunits: a(1), b(2) and c(9-12). The alpha and beta chains form an alternating ring which encloses part of the gamma chain. CF(1) is attached to CF(0) by a central stalk formed by the gamma and epsilon chains, while a peripheral stalk is formed by the delta and b chains.

It is found in the cell membrane. The enzyme catalyses ATP + H2O + 4 H(+)(in) = ADP + phosphate + 5 H(+)(out). In terms of biological role, produces ATP from ADP in the presence of a proton gradient across the membrane. The alpha chain is a regulatory subunit. This Mycoplasma mycoides subsp. mycoides SC (strain CCUG 32753 / NCTC 10114 / PG1) protein is ATP synthase subunit alpha.